The sequence spans 480 residues: Sensor histidine kinase CusS (480 aa).

Topologically, residues M1–R15 are cytoplasmic. A helical membrane pass occupies residues L16–I36. Residues H37–K186 are Periplasmic-facing. The helical transmembrane segment at L187–H207 threads the bilayer. Positions H207–T260 constitute an HAMP domain. Topologically, residues K208–A480 are cytoplasmic. In terms of domain architecture, Histidine kinase spans D268–A480. H271 bears the Phosphohistidine; by autocatalysis mark.

In terms of processing, autophosphorylated.

It localises to the cell inner membrane. It carries out the reaction ATP + protein L-histidine = ADP + protein N-phospho-L-histidine.. Functionally, member of the two-component regulatory system CusS/CusR involved in response to copper and silver. Acts as a copper/silver ion sensor. Activates CusR by phosphorylation. This is Sensor histidine kinase CusS (cusS) from Escherichia coli O6:H1 (strain CFT073 / ATCC 700928 / UPEC).